A 421-amino-acid chain; its full sequence is Transcription factor IIIB 50 kDa subunit (421 aa).

The segment at 2–36 adopts a TFIIB-type zinc-finger fold; it reads PGRGRCPDCGSAELVEDSHYSQNQLVCSDCGCVVT. The Zn(2+) site is built by C7, C10, C28, and C31. Tandem repeats lie at residues 72–157 and 173–249. An interaction with target DNA region spans residues 108–114; sequence TARLQKK. The disordered stretch occupies residues 325–357; that stretch reads ELQGQGQGQGLGDEDVGSSSLELPAGKRPSSPA. Residue S355 is modified to Phosphoserine. Residues 359-365 form a required for the formation of a ternary complex with DNA and TBP; not required for interaction with TBP in the absence of DNA region; that stretch reads LLPPCML. C363 carries the cysteine sulfenic acid (-SOH) modification. Positions 367 to 421 are required for interaction with TBP and formation of a ternary complex with DNA and TBP; the sequence is PPKRVCPAPPVSMVTGDEDISDSEIEQYLRTPQEVRDFQKAQAARQAAQGTPNPP.

It belongs to the TFIIB family. In terms of assembly, component of TFIIIB complexes. The TFIIIB complex has two activities, alpha and beta. The TFIIIB-alpha activity complex is composed of TBP, BDP1, and a complex containing both BRF2 and at least four stably associated proteins; this complex inhibits the transcription by pol III via its phosphorylation by CK2; YY1 facilitates the TFIIIB-alpha complex formation. Interacts with TBP; this interaction promotes recruitment of BRF2 to TATA box-containing promoters. Interacts with TBP and the BURE sequence (GC-rich sequence downstream from the TATA box) to form a strong ternary complex which is joined by BDP1; this ternary complex stimulates pol III transcription. Forms a trimeric complex composed of TBP, BRF2 and mini-SNAPc complex (SNAP43, SNAP50, and the N-terminal third of SNAP190) on the promoter. Assembly of the TBP-BRF2 complex is stimulated by SNAP190. Interacts with MAF1 and SNAPC4. In response to oxidative stress, Cys-363 is reversibly oxidized to cysteine sulfenic acid. Oxidation of Cys-363 impairs formation of a ternary complex with TBP and DNA and down-regulates expression of target genes in response to oxidative stress.

It is found in the nucleus. Functionally, general activator of RNA polymerase III transcription. Factor exclusively required for RNA polymerase III transcription of genes with promoter elements upstream of the initiation sites. Contributes to the regulation of gene expression; functions as activator in the absence of oxidative stress. Down-regulates expression of target genes in response to oxidative stress. Overexpression protects cells against apoptosis in response to oxidative stress. This Bos taurus (Bovine) protein is Transcription factor IIIB 50 kDa subunit (BRF2).